The primary structure comprises 352 residues: Organic solute transporter subunit alpha (352 aa).

Topologically, residues 1–45 are extracellular; sequence MDVAHPEEVTRFSPDILMEKFNVSEACFLPPPISIQLILQLTWLD. Asn22 carries N-linked (GlcNAc...) asparagine glycosylation. A helical membrane pass occupies residues 46–66; sequence IGVFAALTAMTVLTIAIYLEI. The Cytoplasmic portion of the chain corresponds to 67-82; the sequence is VCYLMDKVKCPIKRKT. Residues 83–103 traverse the membrane as a helical segment; that stretch reads LMWNSAAPTVIAITSCLGLWV. Residues 104–108 are Extracellular-facing; it reads PRAIM. The chain crosses the membrane as a helical span at residues 109–129; it reads FVDMAAAMYFGVGFYLMLLII. Residues 130–173 lie on the Cytoplasmic side of the membrane; it reads VQGYGGEEAMLQHLATHTIRISTGPCCCCCPCLPHIHLTRQKYK. A helical transmembrane segment spans residues 174-194; sequence IFVLGAFQVAFLRPALFLLGV. The Extracellular portion of the chain corresponds to 195-210; it reads VLWTNGLYDPDDWSST. Residues 211-231 traverse the membrane as a helical segment; it reads SIFLWLNLFLGVSTILGLWPV. Over 232–250 the chain is Cytoplasmic; that stretch reads NVLFRHSKVLMADQKLTCK. The chain crosses the membrane as a helical span at residues 251–271; that stretch reads FALFQAILILSSLQNSIIGTL. Residues 272–294 lie on the Extracellular side of the membrane; it reads AGAGHIGCAPPYSARTRGQQMNN. Residues 295 to 312 form a helical membrane-spanning segment; sequence QLLIIEMFFVGILTRISY. At 313-352 the chain is on the cytoplasmic side; sequence RKRDDRPGHRHVGEVQQIVRECDQPAIADQQADHSSISHI.

The protein belongs to the OST-alpha family. Interacts with slc51b. The Ost-alpha/Ost-beta complex is a heterodimer composed of alpha (slc51a) and beta (slc51b) subunit. In terms of tissue distribution, expressed in liver.

It localises to the cell membrane. The protein localises to the endoplasmic reticulum membrane. It catalyses the reaction taurocholate(out) = taurocholate(in). The catalysed reaction is prostaglandin E2(out) = prostaglandin E2(in). The enzyme catalyses estrone 3-sulfate(out) = estrone 3-sulfate(in). It carries out the reaction dehydroepiandrosterone 3-sulfate(out) = dehydroepiandrosterone 3-sulfate(in). It catalyses the reaction tauroursodeoxycholate(out) = tauroursodeoxycholate(in). The catalysed reaction is glycoursodeoxycholate(out) = glycoursodeoxycholate(in). The enzyme catalyses glycocholate(out) = glycocholate(in). It carries out the reaction taurochenodeoxycholate(out) = taurochenodeoxycholate(in). It catalyses the reaction glycochenodeoxycholate(out) = glycochenodeoxycholate(in). The catalysed reaction is taurodeoxycholate(out) = taurodeoxycholate(in). The enzyme catalyses glycodeoxycholate(out) = glycodeoxycholate(in). Its function is as follows. Essential component of the Ost-alpha/Ost-beta complex, a heterodimer that acts as the intestinal basolateral transporter responsible for the translocation of bile acids (such as taurocholate), steroids (such as estrone sulfate), and eicosanoids (such as prostaglandin E2). This Leucoraja erinaceus (Little skate) protein is Organic solute transporter subunit alpha (slc51a).